A 206-amino-acid chain; its full sequence is Guanylate kinase (206 aa).

Positions 6–184 (GTLYIISAPS…ALGDLKAIFR (179 aa)) constitute a Guanylate kinase-like domain. 13 to 20 (APSGAGKS) contributes to the ATP binding site.

Belongs to the guanylate kinase family.

The protein resides in the cytoplasm. It carries out the reaction GMP + ATP = GDP + ADP. Its function is as follows. Essential for recycling GMP and indirectly, cGMP. The chain is Guanylate kinase from Pseudomonas fluorescens (strain ATCC BAA-477 / NRRL B-23932 / Pf-5).